We begin with the raw amino-acid sequence, 603 residues long: Peroxisomal targeting signal receptor (603 aa).

Residue Cys-10 forms a Glycyl cysteine thioester (Cys-Gly) (interchain with G-Cter in ubiquitin) linkage. Positions 11–33 are amphipathic helix 1 (AH1); it reads SANSNAIAQFNKHTQQDRSLQRQ. A Glycyl lysine isopeptide (Lys-Gly) (interchain with G-Cter in ubiquitin) cross-link involves residue Lys-22. Residues 23–49 are disordered; sequence HTQQDRSLQRQAANQQGIVQNGQGFKK. The segment covering 31-45 has biased composition (polar residues); the sequence is QRQAANQQGIVQNGQ. Residues 58-76 are amphipathic helix 2 (AH2); sequence RQNMDQFMNNGPSQSNFQF. 3 short sequence motifs (wxxxF/Y motif) span residues 99 to 103, 128 to 132, and 192 to 196; these read WTNEF, WATEF, and WDNQF. The segment at 232-248 is amphipathic helix 4 (AH4); it reads FQEVWDSLNSEEVENDF. The short motif at 271–275 is the WxxxF/Y motif 4 element; the sequence is WEKDF. TPR repeat units follow at residues 304–338, 339–372, 449–482, 484–516, and 518–550; these read ESDP…NEGH, INAW…HPEN, PDVQ…KPDD, VLWN…KPTF, and RARY…HQVE.

This sequence belongs to the peroxisomal targeting signal receptor family. Interacts (via WxxxF/Y and LVxEF motifs) with PEX14; promoting translocation through the PEX13-PEX14 docking complex. Monoubiquitinated at Cys-10 by PEX2 during PEX5 passage through the retrotranslocation channel: monoubiquitination acts as a signal for PEX5 extraction and is required for proper export from peroxisomes and recycling. When PEX5 recycling is compromised, polyubiquitinated at Lys-22 by PEX10 during its passage through the retrotranslocation channel, leading to its degradation.

Its subcellular location is the cytoplasm. The protein resides in the cytosol. It is found in the peroxisome matrix. In terms of biological role, receptor that mediates peroxisomal import of proteins containing a C-terminal PTS1-type tripeptide peroxisomal targeting signal (SKL-type). Binds to cargo proteins containing a PTS1 peroxisomal targeting signal in the cytosol, and translocates them into the peroxisome matrix by passing through the PEX13-PEX14 docking complex along with cargo proteins. PEX5 receptor is then retrotranslocated into the cytosol, leading to release of bound cargo in the peroxisome matrix, and reset for a subsequent peroxisome import cycle. This chain is Peroxisomal targeting signal receptor (PEX5), found in Debaryomyces hansenii (strain ATCC 36239 / CBS 767 / BCRC 21394 / JCM 1990 / NBRC 0083 / IGC 2968) (Yeast).